Reading from the N-terminus, the 325-residue chain is Beta-ketoacyl-[acyl-carrier-protein] synthase III (325 aa).

Residues C116 and H252 contribute to the active site. Positions 253–257 are ACP-binding; that stretch reads QANLR. N282 is an active-site residue.

Belongs to the thiolase-like superfamily. FabH family. Homodimer.

Its subcellular location is the cytoplasm. It carries out the reaction butanoyl-CoA + malonyl-[ACP] + H(+) = 3-oxohexanoyl-[ACP] + CO2 + CoA. The enzyme catalyses hexanoyl-CoA + malonyl-[ACP] + H(+) = 3-oxooctanoyl-[ACP] + CO2 + CoA. It catalyses the reaction octanoyl-CoA + malonyl-[ACP] + H(+) = 3-oxodecanoyl-[ACP] + CO2 + CoA. The catalysed reaction is decanoyl-CoA + malonyl-[ACP] + H(+) = 3-oxododecanoyl-[ACP] + CO2 + CoA. It carries out the reaction 2-methylpropanoyl-CoA + malonyl-[ACP] + H(+) = 4-methyl-3-oxopentanoyl-[ACP] + CO2 + CoA. The enzyme catalyses 3-methylbutanoyl-CoA + malonyl-[ACP] + H(+) = 5-methyl-3-oxohexanoyl-[ACP] + CO2 + CoA. It catalyses the reaction malonyl-[ACP] + acetyl-CoA + H(+) = 3-oxobutanoyl-[ACP] + CO2 + CoA. Its pathway is lipid metabolism; fatty acid biosynthesis. Catalyzes the condensation reaction of fatty acid synthesis by the addition to an acyl acceptor of two carbons from malonyl-ACP. Catalyzes the first condensation reaction which initiates fatty acid synthesis and may therefore play a role in governing the total rate of fatty acid production. Possesses both acetoacetyl-ACP synthase and acetyl transacylase activities. Can use a wide range of acyl-CoAs as the primer substrate in vitro, with a slight preference for short, medium-straight chain acyl-CoAs. Can also use branched-chain acyl-CoAs and acetyl-CoA. The polypeptide is Beta-ketoacyl-[acyl-carrier-protein] synthase III (Xanthomonas campestris pv. campestris (strain 8004)).